We begin with the raw amino-acid sequence, 222 residues long: Chalcone--flavanone isomerase 1 (222 aa).

Substrate-binding residues include Thr48, Asn113, and Thr190.

This sequence belongs to the chalcone isomerase family.

The enzyme catalyses a chalcone = a flavanone.. Its pathway is secondary metabolite biosynthesis; flavonoid biosynthesis. Catalyzes the intramolecular cyclization of bicyclic chalcones into tricyclic (S)-flavanones. Responsible for the isomerization of 4,2',4',6'-tetrahydroxychalcone (also termed chalcone) into naringenin. This is Chalcone--flavanone isomerase 1 (CHI1) from Medicago sativa (Alfalfa).